A 199-amino-acid polypeptide reads, in one-letter code: Glycerol-3-phosphate acyltransferase (199 aa).

A run of 5 helical transmembrane segments spans residues 3–23, 55–75, 79–99, 113–133, and 155–175; these read IKIL…AYIV, VITL…ATFI, FSYS…TIFL, VFFA…GLAF, and YFLG…LLII.

The protein belongs to the PlsY family. As to quaternary structure, probably interacts with PlsX.

The protein resides in the cell inner membrane. It carries out the reaction an acyl phosphate + sn-glycerol 3-phosphate = a 1-acyl-sn-glycero-3-phosphate + phosphate. Its pathway is lipid metabolism; phospholipid metabolism. Catalyzes the transfer of an acyl group from acyl-phosphate (acyl-PO(4)) to glycerol-3-phosphate (G3P) to form lysophosphatidic acid (LPA). This enzyme utilizes acyl-phosphate as fatty acyl donor, but not acyl-CoA or acyl-ACP. This Endomicrobium trichonymphae protein is Glycerol-3-phosphate acyltransferase.